The primary structure comprises 420 residues: Serine hydroxymethyltransferase (420 aa).

(6S)-5,6,7,8-tetrahydrofolate is bound by residues Leu-118 and 122–124; that span reads GHL. An N6-(pyridoxal phosphate)lysine modification is found at Lys-227.

Belongs to the SHMT family. Homodimer. Pyridoxal 5'-phosphate is required as a cofactor.

The protein localises to the cytoplasm. It carries out the reaction (6R)-5,10-methylene-5,6,7,8-tetrahydrofolate + glycine + H2O = (6S)-5,6,7,8-tetrahydrofolate + L-serine. It functions in the pathway one-carbon metabolism; tetrahydrofolate interconversion. It participates in amino-acid biosynthesis; glycine biosynthesis; glycine from L-serine: step 1/1. Its function is as follows. Catalyzes the reversible interconversion of serine and glycine with tetrahydrofolate (THF) serving as the one-carbon carrier. This reaction serves as the major source of one-carbon groups required for the biosynthesis of purines, thymidylate, methionine, and other important biomolecules. Also exhibits THF-independent aldolase activity toward beta-hydroxyamino acids, producing glycine and aldehydes, via a retro-aldol mechanism. This is Serine hydroxymethyltransferase from Persephonella marina (strain DSM 14350 / EX-H1).